An 82-amino-acid chain; its full sequence is ATP synthase subunit c, chloroplastic (82 aa).

2 helical membrane-spanning segments follow: residues 7–27 (AASV…PGIG) and 57–77 (LAFM…LLFA).

The protein belongs to the ATPase C chain family. As to quaternary structure, F-type ATPases have 2 components, F(1) - the catalytic core - and F(0) - the membrane proton channel. F(1) has five subunits: alpha(3), beta(3), gamma(1), delta(1), epsilon(1). F(0) has four main subunits: a(1), b(1), b'(1) and c(10-14). The alpha and beta chains form an alternating ring which encloses part of the gamma chain. F(1) is attached to F(0) by a central stalk formed by the gamma and epsilon chains, while a peripheral stalk is formed by the delta, b and b' chains.

It localises to the plastid. Its subcellular location is the chloroplast thylakoid membrane. Functionally, f(1)F(0) ATP synthase produces ATP from ADP in the presence of a proton or sodium gradient. F-type ATPases consist of two structural domains, F(1) containing the extramembraneous catalytic core and F(0) containing the membrane proton channel, linked together by a central stalk and a peripheral stalk. During catalysis, ATP synthesis in the catalytic domain of F(1) is coupled via a rotary mechanism of the central stalk subunits to proton translocation. Key component of the F(0) channel; it plays a direct role in translocation across the membrane. A homomeric c-ring of between 10-14 subunits forms the central stalk rotor element with the F(1) delta and epsilon subunits. This chain is ATP synthase subunit c, chloroplastic, found in Guillardia theta (Cryptophyte).